A 491-amino-acid polypeptide reads, in one-letter code: (R)-citramalate synthase CimA (491 aa).

Residues 3–254 (VRIFDTTLRD…DTKIKMEKLY (252 aa)) form the Pyruvate carboxyltransferase domain.

Belongs to the alpha-IPM synthase/homocitrate synthase family. Homodimer.

It catalyses the reaction pyruvate + acetyl-CoA + H2O = (3R)-citramalate + CoA + H(+). Its pathway is amino-acid biosynthesis; L-isoleucine biosynthesis; 2-oxobutanoate from pyruvate: step 1/3. Its function is as follows. Catalyzes the condensation of pyruvate and acetyl-coenzyme A to form (R)-citramalate. The protein is (R)-citramalate synthase CimA (cimA) of Methanocaldococcus jannaschii (strain ATCC 43067 / DSM 2661 / JAL-1 / JCM 10045 / NBRC 100440) (Methanococcus jannaschii).